The following is a 1230-amino-acid chain: Serine/threonine-protein kinase CST20 (1230 aa).

Positions 1–20 (MSILSENNPTPTSITDPNKS) are enriched in polar residues. Disordered stretches follow at residues 1-384 (MSIL…TAHN) and 413-470 (SSLE…HSQE). Composition is skewed to low complexity over residues 57–70 (NTTS…SLGS) and 96–125 (SGSG…NPES). Positions 150–161 (HQGDDSDNEKQY) are enriched in basic and acidic residues. Polar residues-rich tracts occupy residues 175-197 (DSYS…NNVS), 207-224 (TSSL…NENA), and 237-246 (PTSKTSSFHD). Residues 248 to 257 (SSVISSSTSV) show a composition bias toward low complexity. Composition is skewed to polar residues over residues 262 to 277 (SNPT…SYKS) and 311 to 330 (DTLS…TLQG). Low complexity-rich tracts occupy residues 349–381 (NTSA…STST) and 439–468 (KVRG…NSHS). A CRIB domain is found at 475–488 (ISTPFNAKHLAHVG). Disordered regions lie at residues 545 to 831 (FHFD…ALAD) and 867 to 919 (LREK…KQAA). Over residues 550–561 (NKSSSSGWSNEN) the composition is skewed to polar residues. A compositionally biased stretch (gly residues) spans 570-581 (SNSGSGSGGGGA). A compositionally biased stretch (polar residues) spans 604–613 (ITPSQSMPTK). Residues 614–628 (TESKQSENQHPHEDN) show a composition bias toward basic and acidic residues. Over residues 629–642 (ATQYTPRTPTSHVQ) the composition is skewed to polar residues. 3 stretches are compositionally biased toward low complexity: residues 670–683 (PSSQ…SQSD), 696–710 (SPSK…SKSL), and 736–749 (SIPK…SLSS). Residues 750-761 (QLRPATNGSTTA) show a composition bias toward polar residues. A compositionally biased stretch (pro residues) spans 789–807 (APPPPPSAPPAPPVPPAPP). The segment covering 811–826 (LSEQTSEIPQQRTAPS) has biased composition (polar residues). Positions 867 to 876 (LREKNERQNR) are enriched in basic and acidic residues. The span at 877-892 (QQETGQNNADTASGGS) shows a compositional bias: polar residues. One can recognise a Protein kinase domain in the interval 953 to 1205 (YVDLVKIGQG…ADELLHDNFI (253 aa)). Residues 959–967 (IGQGASGGV) and Lys983 contribute to the ATP site. Asp1073 acts as the Proton acceptor in catalysis.

Belongs to the protein kinase superfamily. STE Ser/Thr protein kinase family. STE20 subfamily.

Its subcellular location is the cytoplasm. The protein localises to the nucleus. The enzyme catalyses L-seryl-[protein] + ATP = O-phospho-L-seryl-[protein] + ADP + H(+). It catalyses the reaction L-threonyl-[protein] + ATP = O-phospho-L-threonyl-[protein] + ADP + H(+). In terms of biological role, MAP4K component of the MAPK pathway required for the mating pheromone response, and the regulation of cell polarity and cell cycle. Phosphorylates histone H2B to form H2BS10ph. Required for hyphal formation and virulence. The sequence is that of Serine/threonine-protein kinase CST20 (CST20) from Candida albicans (Yeast).